A 438-amino-acid polypeptide reads, in one-letter code: Putative truncated GMC-type inactive oxidoreductase L894 (438 aa).

Residues 1 to 26 (MYVFLLFSRYKIFYVYIKKMAHRSRC) form the signal peptide. 79–109 (DIVIIGAGAAGCVLAYYLTKFSDLKIILLEA) contacts FAD.

Belongs to the GMC oxidoreductase family. Requires FAD as cofactor.

It is found in the virion. The chain is Putative truncated GMC-type inactive oxidoreductase L894 from Acanthamoeba polyphaga (Amoeba).